We begin with the raw amino-acid sequence, 297 residues long: MVHQVLYRALVSTKWLAESIRSGRLGPSLRVLDASWYSPGTRQARKEYQERHVPGASFFDIEECRDTTSPYEMMLPSEAHFGDYVGNLGISNDTHVVVYDGDDLGSFYAPRVWWMFRVFGHRTVSVLNGGFRNWLKEGHPVTSEPSRPEPAVFKATLNLSLLKTYEQVLENLQSKRFQLVDSRAQGRYLGTQPEPDIVGLDSGHIRGSVNMPFMDFLTKDGFEKSPEELRAIFQDKKVDLSQPLIATCRKGVTACHVALAAYLCGKPDVAVYDGSWSEWFRRAPPETRVSQGKSGKA.

Position 14 is an N6-acetyllysine; alternate (K14). K14 bears the N6-succinyllysine; alternate mark. A Rhodanese 1 domain is found at 25-143 (LGPSLRVLDA…WLKEGHPVTS (119 aa)). O-linked (GlcNAc) serine glycosylation occurs at S35. The residue at position 38 (S38) is a Phosphoserine. The residue at position 136 (K136) is an N6-acetyllysine; alternate. K136 bears the N6-succinyllysine; alternate mark. Residues 144-159 (EPSRPEPAVFKATLNL) form a hinge region. An N6-acetyllysine modification is found at K163. One can recognise a Rhodanese 2 domain in the interval 173-288 (QSKRFQLVDS…WFRRAPPETR (116 aa)). K175 is modified (N6-acetyllysine; alternate). An N6-succinyllysine; alternate modification is found at K175. Substrate is bound at residue R187. N6-acetyllysine; alternate occurs at positions 219 and 224. N6-succinyllysine; alternate is present on residues K219 and K224. K236 carries the N6-acetyllysine modification. Residue K237 is modified to N6-acetyllysine; alternate. K237 is modified (N6-succinyllysine; alternate). Catalysis depends on C248, which acts as the Cysteine persulfide intermediate. K250 provides a ligand contact to substrate.

Monomer. As to expression, expressed in numerous tissues.

The protein resides in the mitochondrion matrix. The catalysed reaction is thiosulfate + hydrogen cyanide = thiocyanate + sulfite + 2 H(+). Together with MRPL18, acts as a mitochondrial import factor for the cytosolic 5S rRNA. Only the nascent unfolded cytoplasmic form is able to bind to the 5S rRNA. Formation of iron-sulfur complexes and cyanide detoxification. The polypeptide is Thiosulfate sulfurtransferase (Tst) (Mus musculus (Mouse)).